Here is a 561-residue protein sequence, read N- to C-terminus: Arginine--tRNA ligase (561 aa).

The 'HIGH' region signature appears at 128 to 138 (ANPTGPLHVGH).

Belongs to the class-I aminoacyl-tRNA synthetase family. In terms of assembly, monomer.

The protein localises to the cytoplasm. It carries out the reaction tRNA(Arg) + L-arginine + ATP = L-arginyl-tRNA(Arg) + AMP + diphosphate. The protein is Arginine--tRNA ligase of Methylibium petroleiphilum (strain ATCC BAA-1232 / LMG 22953 / PM1).